A 143-amino-acid chain; its full sequence is Snake venom vascular endothelial growth factor toxin (143 aa).

The N-terminal stretch at 1-24 (MAAYLLAVAILFCIQGWPSATVQG) is a signal peptide. At glutamine 25 the chain carries Pyrrolidone carboxylic acid. 3 disulfide bridges follow: cysteine 38/cysteine 80, cysteine 69/cysteine 115, and cysteine 73/cysteine 117. The segment at 115–143 (CECRPRSPGDVNNGRNPEEGEPRARFPFV) is disordered. Basic and acidic residues predominate over residues 130 to 143 (NPEEGEPRARFPFV).

Belongs to the PDGF/VEGF growth factor family. Snake venom VEGF subfamily. As to quaternary structure, homodimer; disulfide-linked. Interacts with VEGF receptor-2 (KDR). The N-terminus is blocked for N-terminal sequencing, suggesting a Pyrrolidone carboxylic acid at Gln-25. In terms of tissue distribution, expressed by the venom gland.

It localises to the secreted. Its function is as follows. Snake venom VEGFs that may contribute to venom dispersion and prey subjugation by inducing vascular permeability and hypotension. This protein induces an increase in capillary permeability when intradermally injected into mice. Also provokes a drastic hypotensive effect after intravenous injection. The hypotension is mediated by nitric oxide (NO), which is produced by VEGF-activated endothelium NO synthase. Also induces angiogenesis in vitro. Unlike other crotalid VEGFs, this protein interacts with VEGF receptor-2 (KDR) with a high affinity (Kd=413 pM), whereas no interaction is detected with VEGF receptor-1 (FLT1). The protein is Snake venom vascular endothelial growth factor toxin of Protobothrops jerdonii (Jerdon's pitviper).